The following is a 367-amino-acid chain: Phosphoribosylaminoimidazole-succinocarboxamide synthase (367 aa).

This sequence belongs to the SAICAR synthetase family.

The catalysed reaction is 5-amino-1-(5-phospho-D-ribosyl)imidazole-4-carboxylate + L-aspartate + ATP = (2S)-2-[5-amino-1-(5-phospho-beta-D-ribosyl)imidazole-4-carboxamido]succinate + ADP + phosphate + 2 H(+). It functions in the pathway purine metabolism; IMP biosynthesis via de novo pathway; 5-amino-1-(5-phospho-D-ribosyl)imidazole-4-carboxamide from 5-amino-1-(5-phospho-D-ribosyl)imidazole-4-carboxylate: step 1/2. The polypeptide is Phosphoribosylaminoimidazole-succinocarboxamide synthase (Vibrio parahaemolyticus serotype O3:K6 (strain RIMD 2210633)).